Consider the following 200-residue polypeptide: NADH-quinone oxidoreductase subunit C (200 aa).

It belongs to the complex I 30 kDa subunit family. As to quaternary structure, NDH-1 is composed of 14 different subunits. Subunits NuoB, C, D, E, F, and G constitute the peripheral sector of the complex.

The protein localises to the cell inner membrane. It carries out the reaction a quinone + NADH + 5 H(+)(in) = a quinol + NAD(+) + 4 H(+)(out). In terms of biological role, NDH-1 shuttles electrons from NADH, via FMN and iron-sulfur (Fe-S) centers, to quinones in the respiratory chain. The immediate electron acceptor for the enzyme in this species is believed to be ubiquinone. Couples the redox reaction to proton translocation (for every two electrons transferred, four hydrogen ions are translocated across the cytoplasmic membrane), and thus conserves the redox energy in a proton gradient. This Maricaulis maris (strain MCS10) (Caulobacter maris) protein is NADH-quinone oxidoreductase subunit C.